A 487-amino-acid chain; its full sequence is DNA-dependent metalloprotease SPRTN (487 aa).

M1 carries the post-translational modification N-acetylmethionine. The region spanning 45-212 is the SprT-like domain; it reads LQGLFVLFND…KTCGGTYIKI (168 aa). Position 111 (H111) interacts with Zn(2+). E112 is an active-site residue. The Zn(2+) site is built by H115 and H130. The segment at 219 to 248 is disordered; the sequence is SKKGKGKTKLRKQPVSEAENKDKPNRGEKQ. Basic residues predominate over residues 220-230; the sequence is KKGKGKTKLRK. K230 carries the N6-acetyllysine modification. Over residues 236 to 247 the composition is skewed to basic and acidic residues; the sequence is AENKDKPNRGEK. Residues 253–261 carry the SHP-box motif; the sequence is FTGKGYVLG. A Phosphoserine modification is found at S267. A compositionally biased stretch (polar residues) spans 280–289; it reads SQEPLSQDHS. The tract at residues 280 to 317 is disordered; the sequence is SQEPLSQDHSANALRPHSKTEVKFEQNGPSKKTSVASP. K302 participates in a covalent cross-link: Glycyl lysine isopeptide (Lys-Gly) (interchain with G-Cter in SUMO2). Residues 306 to 317 are compositionally biased toward polar residues; that stretch reads NGPSKKTSVASP. The PIP-box signature appears at 324–331; that stretch reads QNVLSNYF. K340 participates in a covalent cross-link: Glycyl lysine isopeptide (Lys-Gly) (interchain with G-Cter in SUMO2); alternate. A Glycyl lysine isopeptide (Lys-Gly) (interchain with G-Cter in ubiquitin); alternate cross-link involves residue K340. The tract at residues 347–379 is disordered; it reads GSPVKSLTVGDSTTKSVSAGSQRRVTSSRTSLR. S373 bears the Phosphoserine mark. Residues 401–412 carry the Nuclear localization signal motif; sequence GKLPSKRPRIED. K413 is covalently cross-linked (Glycyl lysine isopeptide (Lys-Gly) (interchain with G-Cter in ubiquitin)). Residues K422 and K423 each participate in a glycyl lysine isopeptide (Lys-Gly) (interchain with G-Cter in SUMO2) cross-link. The disordered stretch occupies residues 427 to 455; it reads QSGGGDVTSSSHPPAAAQSPSGASGQSRV. Residues 435–453 are compositionally biased toward low complexity; the sequence is SSSHPPAAAQSPSGASGQS. Residues 455 to 482 form a UBZ4-type zinc finger; the sequence is VVHCPVCQDEVSETQINEHLDWCLERDS. Zn(2+) is bound by residues C458, C461, H473, and C477. K486 is covalently cross-linked (Glycyl lysine isopeptide (Lys-Gly) (interchain with G-Cter in SUMO2)).

It belongs to the Spartan family. As to quaternary structure, homodimer. Interacts (VIA PIP-box) with PCNA (when ubiquitinated). Interacts (via its SHP-box) with VCP/p97. Interacts with RAD18. Interacts with KCTD13 and POLD3. The cofactor is Zn(2+). Autocatalytically cleaved in response to double-stranded DNA-binding: autocatalytic cleavage takes place in trans and leads to inactivation. Post-translationally, monoubiquitinated; monoubiquitination promotes exclusion from chromatin. Deubiquitinated by VCPIP1: deubiquitination is required for subsequent acetylation and recruitment to chromatin and DNA damage sites. In terms of processing, acetylated following deubiquitination by VCPIP1, leading to recruitment to chromatin and DNA damage sites. Phosphorylation by CHEK1 promotes recruitment to chromatin.

It localises to the nucleus. The protein resides in the chromosome. Its activity is regulated as follows. DNA-binding activates the protease activity: single-stranded DNA-binding specifically activates ability to cleave covalent DNA-protein cross-links (DPCs). In contrast, double-stranded DNA-binding specifically activates autocatalytic cleavage, and subsequent inactivation. DNA-dependent metalloendopeptidase that mediates the proteolytic cleavage of covalent DNA-protein cross-links (DPCs) during DNA synthesis, thereby playing a key role in maintaining genomic integrity. DPCs are highly toxic DNA lesions that interfere with essential chromatin transactions, such as replication and transcription, and which are induced by reactive agents, such as UV light or formaldehyde. Associates with the DNA replication machinery and specifically removes DPCs during DNA synthesis. Catalyzes proteolytic cleavage of the HMCES DNA-protein cross-link following unfolding by the BRIP1/FANCJ helicase. Acts as a pleiotropic protease for DNA-binding proteins cross-linked with DNA, such as TOP1, TOP2A, histones H3 and H4. Mediates degradation of DPCs that are not ubiquitinated, while it is not able to degrade ubiquitinated DPCs. SPRTN activation requires polymerase collision with DPCs followed by helicase bypass of DPCs. Involved in recruitment of VCP/p97 to sites of DNA damage. Also acts as an activator of CHEK1 during normal DNA replication by mediating proteolytic cleavage of CHEK1, thereby promoting CHEK1 removal from chromatin and subsequent activation. Does not activate CHEK1 in response to DNA damage. May also act as a 'reader' of ubiquitinated PCNA: recruited to sites of UV damage and interacts with ubiquitinated PCNA and RAD18, the E3 ubiquitin ligase that monoubiquitinates PCNA. Facilitates chromatin association of RAD18 and is required for efficient PCNA monoubiquitination, promoting a feed-forward loop to enhance PCNA ubiquitination and translesion DNA synthesis. This chain is DNA-dependent metalloprotease SPRTN, found in Bos taurus (Bovine).